The sequence spans 529 residues: Peptide chain release factor 3 (529 aa).

A tr-type G domain is found at 11-280 (AKRRTFAIIS…GLVEWAPAPM (270 aa)). GTP-binding positions include 20–27 (SHPDAGKT), 88–92 (DTPGH), and 142–145 (NKLD).

Belongs to the TRAFAC class translation factor GTPase superfamily. Classic translation factor GTPase family. PrfC subfamily.

It localises to the cytoplasm. Its function is as follows. Increases the formation of ribosomal termination complexes and stimulates activities of RF-1 and RF-2. It binds guanine nucleotides and has strong preference for UGA stop codons. It may interact directly with the ribosome. The stimulation of RF-1 and RF-2 is significantly reduced by GTP and GDP, but not by GMP. The polypeptide is Peptide chain release factor 3 (Yersinia pestis bv. Antiqua (strain Antiqua)).